Reading from the N-terminus, the 673-residue chain is Cell division cycle protein 23 homolog (673 aa).

TPR repeat units lie at residues 86–120 (AEMW…VLDN), 159–195 (NKEF…YQEH), 232–267 (EDVW…EPRI), 332–365 (PMII…DPYR), 400–433 (WETC…NPGL), 434–467 (AALW…DPAD), 469–501 (RGWY…KPHD), 502–535 (SRLL…GDVE), 539–572 (LWSL…VTSA), and 577–610 (IYAI…ETLC). Positions 628–673 (SRLPVEEAPGPSNASAAGGQEAMDTEEAPQEGGEEEMSEGEDDFSF) are disordered. The segment covering 635-646 (APGPSNASAAGG) has biased composition (low complexity). A compositionally biased stretch (acidic residues) spans 650–673 (MDTEEAPQEGGEEEMSEGEDDFSF).

The protein belongs to the APC8/CDC23 family. The APC/C complex is probably composed of at least 12 subunits: apc-2, apc-10, apc-11, cdc-26, emb-1, emb-27, emb-30, mat-1, mat-2, mat-3, such-1 and gfi-3.

It functions in the pathway protein modification; protein ubiquitination. Functionally, probable component of the anaphase promoting complex/cyclosome (APC/C), a cell cycle-regulated E3 ubiquitin ligase that controls progression through mitosis and the G1 phase of the cell cycle. The APC/C complex acts by mediating ubiquitination and subsequent degradation of target proteins. Developmental role in early embryogenesis and the metaphase to anaphase transition in oocyte and spermatocyte meiosis and mitosis in germ cells. Required for embryonic anterior-posterior axis formation. Plays a role in regulating the abundance of glr-1 receptors in postmitotic neurons, which may in turn control animal locomotion. Involved in regulating GABA neurotransmitter release at neuromuscular junctions in GABA motor neurons. This Caenorhabditis elegans protein is Cell division cycle protein 23 homolog.